The chain runs to 312 residues: Serine acetyltransferase 5 (312 aa).

The segment covering 1 to 17 (MPPAGELRHQSPSKEKL) has biased composition (basic and acidic residues). The disordered stretch occupies residues 1-25 (MPPAGELRHQSPSKEKLSSVTQSDE).

Belongs to the transferase hexapeptide repeat family. Homomultimer. Mostly expressed in stems, flowers and siliques. Localized in vascular tissues, particularly in phloem.

The protein resides in the cytoplasm. It carries out the reaction L-serine + acetyl-CoA = O-acetyl-L-serine + CoA. It participates in amino-acid biosynthesis; L-cysteine biosynthesis; L-cysteine from L-serine: step 1/2. With respect to regulation, feedback inhibitions by L-Ser and acetyl-CoA. In Arabidopsis thaliana (Mouse-ear cress), this protein is Serine acetyltransferase 5 (SAT5).